The chain runs to 33 residues: Gastrin (33 aa).

Pyrrolidone carboxylic acid occurs at positions 1 and 18. Y28 bears the Sulfotyrosine mark. A Phenylalanine amide modification is found at F33.

The protein belongs to the gastrin/cholecystokinin family.

It is found in the secreted. Gastrin stimulates the stomach mucosa to produce and secrete hydrochloric acid and the pancreas to secrete its digestive enzymes. It also stimulates smooth muscle contraction and increases blood circulation and water secretion in the stomach and intestine. This chain is Gastrin (GAST), found in Didelphis virginiana (North American opossum).